The primary structure comprises 156 residues: Small ribosomal subunit protein uS7 (156 aa).

Belongs to the universal ribosomal protein uS7 family. In terms of assembly, part of the 30S ribosomal subunit. Contacts proteins S9 and S11.

One of the primary rRNA binding proteins, it binds directly to 16S rRNA where it nucleates assembly of the head domain of the 30S subunit. Is located at the subunit interface close to the decoding center, probably blocks exit of the E-site tRNA. This chain is Small ribosomal subunit protein uS7, found in Vibrio vulnificus (strain CMCP6).